We begin with the raw amino-acid sequence, 64 residues long: Bubble protein (64 aa).

Disulfide bonds link Cys-3-Cys-30, Cys-18-Cys-38, Cys-28-Cys-54, and Cys-49-Cys-64.

Its subcellular location is the secreted. Its function is as follows. May act as a toxin. May recognize a molecule or part of a molecule with a negatively charged surface potential. This is Bubble protein from Penicillium brevicompactum.